The chain runs to 62 residues: U8-theraphotoxin-Cg1a 2 (62 aa).

The first 21 residues, 1–21 (MKTLVLFIIFGLAALFLLSSA), serve as a signal peptide directing secretion. Positions 22 to 29 (TELEETER) are excised as a propeptide. 3 cysteine pairs are disulfide-bonded: Cys31–Cys46, Cys38–Cys51, and Cys45–Cys58.

Belongs to the neurotoxin 10 (Hwtx-1) family. 30 (Jztx-14) subfamily. In terms of tissue distribution, expressed by the venom gland.

It localises to the secreted. Functionally, probable ion channel inhibitor. The polypeptide is U8-theraphotoxin-Cg1a 2 (Chilobrachys guangxiensis (Chinese earth tiger tarantula)).